The primary structure comprises 184 residues: Guanylate kinase (184 aa).

The 179-residue stretch at 5-183 (NGLIVITGPS…ALLEIKKLIK (179 aa)) folds into the Guanylate kinase-like domain. 12–19 (GPSGVGKG) is an ATP binding site.

This sequence belongs to the guanylate kinase family.

The protein localises to the cytoplasm. The enzyme catalyses GMP + ATP = GDP + ADP. Essential for recycling GMP and indirectly, cGMP. This chain is Guanylate kinase, found in Prochlorococcus marinus (strain SARG / CCMP1375 / SS120).